A 635-amino-acid polypeptide reads, in one-letter code: MTVVRLPDGTDKVFDYPVTVLDVAESIGPGLARVALAGKLNGRLVDLSEPIEIDSDLVLITNKDPEGLEIIRHSCAHLLAHAVKELFPSAQVTIGPVIEDGFYYDFSYERPFTPEDLAAIEKRMQEISRRNLKIERKVWDRSKAIGFFKDLGEHYKAQIIASIPNDEPVSLYSQGDFTDLCRGPHVPYTSRIKVFKLMKIAGAYWRGDSKNEMLQRIYGTAWVSSEEQNNYLRRLEEAEKRDHRKLGKQLDLFHMQEEAPGMVYWHPKGWAIWQQIEQYMRQVLAKNGYVEIRTPQVLDISLWEKSGHWENFRENMFITESESRHYAIKPMNCPGHVQVFNHGLRSYRDLPLRLAEFGSCHRNEASGALHGLMRVRSFTQDDAHIFCTEDQVLEEVTKFIDLLNQVYIDFGFHENLIKLSTRPAQRVGTEEQWDRAEAALAAALNQKELNWELQPGEGAFYGPKIEFTLKDSLGRKWQCGTLQLDFSMPARLGAGYIAEDNTKKIPVMLHRAILGSMERFIGILIEHHAGALPVWLSPDQVVVLNISRNQADYVQSITNELKQNDIRVSSDLRNEKISYKIREHSLQKVPYLIVVGDKEVENQTVTVRGRSNHDHGAMSLEGFVTLIRKEMAERV.

A TGS domain is found at 1 to 61 (MTVVRLPDGT…EIDSDLVLIT (61 aa)). Positions 242–533 (DHRKLGKQLD…LIEHHAGALP (292 aa)) are catalytic. Positions 333, 384, and 510 each coordinate Zn(2+).

Belongs to the class-II aminoacyl-tRNA synthetase family. Homodimer. Zn(2+) is required as a cofactor.

The protein resides in the cytoplasm. It carries out the reaction tRNA(Thr) + L-threonine + ATP = L-threonyl-tRNA(Thr) + AMP + diphosphate + H(+). In terms of biological role, catalyzes the attachment of threonine to tRNA(Thr) in a two-step reaction: L-threonine is first activated by ATP to form Thr-AMP and then transferred to the acceptor end of tRNA(Thr). Also edits incorrectly charged L-seryl-tRNA(Thr). This Nitrosomonas eutropha (strain DSM 101675 / C91 / Nm57) protein is Threonine--tRNA ligase.